The following is a 130-amino-acid chain: UPF0212 protein PF1486 (130 aa).

This sequence belongs to the UPF0212 family.

The sequence is that of UPF0212 protein PF1486 from Pyrococcus furiosus (strain ATCC 43587 / DSM 3638 / JCM 8422 / Vc1).